The sequence spans 185 residues: Adenine phosphoribosyltransferase (185 aa).

The protein belongs to the purine/pyrimidine phosphoribosyltransferase family. Homodimer.

The protein localises to the cytoplasm. The catalysed reaction is AMP + diphosphate = 5-phospho-alpha-D-ribose 1-diphosphate + adenine. It participates in purine metabolism; AMP biosynthesis via salvage pathway; AMP from adenine: step 1/1. Its function is as follows. Catalyzes a salvage reaction resulting in the formation of AMP, that is energically less costly than de novo synthesis. The chain is Adenine phosphoribosyltransferase from Aliarcobacter butzleri (strain RM4018) (Arcobacter butzleri).